The primary structure comprises 626 residues: DEAD-box ATP-dependent RNA helicase 16 (626 aa).

The segment at 1-48 (MGKTKLKPVEDVNSEVVDEVEKAEEVEEQRNDREQEEEQKEEEAPKSF) is disordered. The stretch at 9–47 (VEDVNSEVVDEVEKAEEVEEQRNDREQEEEQKEEEAPKS) forms a coiled coil. A compositionally biased stretch (acidic residues) spans 12–27 (VNSEVVDEVEKAEEVE). Residues 46–74 (KSFEELGLDSRLIRALTKKGIEKPTLIQQ) carry the Q motif motif. One can recognise a Helicase ATP-binding domain in the interval 77–259 (IPYILEGKDV…KLILHNPIVL (183 aa)). 90 to 97 (AKTGSGKT) serves as a coordination point for ATP. Positions 207-210 (DEAD) match the DEAD box motif. The 185-residue stretch at 293-477 (ALLKLEVVQK…PFPLLTENAV (185 aa)) folds into the Helicase C-terminal domain. A coiled-coil region spans residues 356–385 (IATDDNSQTKKQKEEAKGEANKENKKNNKR). Over residues 363 to 381 (QTKKQKEEAKGEANKENKK) the composition is skewed to basic and acidic residues. Disordered stretches follow at residues 363-388 (QTKK…RSKP) and 568-626 (AMGN…QKTV).

The protein belongs to the DEAD box helicase family. DDX56/DBP9 subfamily.

It catalyses the reaction ATP + H2O = ADP + phosphate + H(+). This Arabidopsis thaliana (Mouse-ear cress) protein is DEAD-box ATP-dependent RNA helicase 16 (RH16).